The chain runs to 147 residues: Small ribosomal subunit protein uS5 (147 aa).

The 64-residue stretch at 9 to 72 folds into the S5 DRBM domain; that stretch reads FEEVIVDIGR…DDAFKNIIHV (64 aa).

Belongs to the universal ribosomal protein uS5 family. Part of the 30S ribosomal subunit. Contacts proteins S4 and S8.

With S4 and S12 plays an important role in translational accuracy. Functionally, located at the back of the 30S subunit body where it stabilizes the conformation of the head with respect to the body. The chain is Small ribosomal subunit protein uS5 from Campylobacter concisus (strain 13826).